Consider the following 97-residue polypeptide: Aspartyl/glutamyl-tRNA(Asn/Gln) amidotransferase subunit C (97 aa).

This sequence belongs to the GatC family. In terms of assembly, heterotrimer of A, B and C subunits.

The catalysed reaction is L-glutamyl-tRNA(Gln) + L-glutamine + ATP + H2O = L-glutaminyl-tRNA(Gln) + L-glutamate + ADP + phosphate + H(+). It catalyses the reaction L-aspartyl-tRNA(Asn) + L-glutamine + ATP + H2O = L-asparaginyl-tRNA(Asn) + L-glutamate + ADP + phosphate + 2 H(+). In terms of biological role, allows the formation of correctly charged Asn-tRNA(Asn) or Gln-tRNA(Gln) through the transamidation of misacylated Asp-tRNA(Asn) or Glu-tRNA(Gln) in organisms which lack either or both of asparaginyl-tRNA or glutaminyl-tRNA synthetases. The reaction takes place in the presence of glutamine and ATP through an activated phospho-Asp-tRNA(Asn) or phospho-Glu-tRNA(Gln). The polypeptide is Aspartyl/glutamyl-tRNA(Asn/Gln) amidotransferase subunit C (Prochlorococcus marinus (strain MIT 9215)).